Consider the following 284-residue polypeptide: Tegument protein UL23 (284 aa).

This sequence belongs to the herpesviridae US22 family. Interacts with host NMI; this interaction inhibits NMI interaction with STAT1.

It is found in the virion tegument. The protein localises to the host cytoplasm. Plays a role in the inhibition of host innate immune response by disrupting the interaction between NMI and STAT1. In turn, NMI-mediated transcription of interferon-gamma stimulated genes is inhibited. The chain is Tegument protein UL23 (UL23) from Homo sapiens (Human).